The primary structure comprises 431 residues: Argininosuccinate lyase (431 aa).

The protein belongs to the lyase 1 family. Argininosuccinate lyase subfamily.

The protein resides in the cytoplasm. The enzyme catalyses 2-(N(omega)-L-arginino)succinate = fumarate + L-arginine. The protein operates within amino-acid biosynthesis; L-arginine biosynthesis; L-arginine from L-ornithine and carbamoyl phosphate: step 3/3. This is Argininosuccinate lyase from Xanthomonas oryzae pv. oryzae (strain MAFF 311018).